A 473-amino-acid polypeptide reads, in one-letter code: BPI fold-containing family B member 3 (473 aa).

The N-terminal stretch at 1–20 (MMLGVYTLLLLWGLATPCLG) is a signal peptide. N-linked (GlcNAc...) asparagine glycosylation is present at Asn139. A disulfide bridge links Cys161 with Cys196.

The protein belongs to the BPI/LBP/Plunc superfamily. BPI/LBP family.

The protein localises to the secreted. May have the capacity to recognize and bind specific classes of odorants. May act as a carrier molecule, transporting odorants across the mucus layer to access receptor sites. May serve as a primary defense mechanism by recognizing and removing potentially harmful odorants or pathogenic microorganisms from the mucosa or clearing excess odorant from mucus to enable new odorant stimuli to be received. The protein is BPI fold-containing family B member 3 of Mus musculus (Mouse).